Consider the following 708-residue polypeptide: DNA ligase (708 aa).

NAD(+) is bound by residues 35 to 39, 84 to 85, and glutamate 118; these read DADYD and SL. Lysine 120 (N6-AMP-lysine intermediate) is an active-site residue. Arginine 141, glutamate 182, lysine 303, and lysine 327 together coordinate NAD(+). Zn(2+) is bound by residues cysteine 419, cysteine 422, cysteine 437, and cysteine 443. In terms of domain architecture, BRCT spans 628 to 708; the sequence is TRASEVSGKT…GWAKIVADAQ (81 aa).

This sequence belongs to the NAD-dependent DNA ligase family. LigA subfamily. Mg(2+) is required as a cofactor. It depends on Mn(2+) as a cofactor.

The enzyme catalyses NAD(+) + (deoxyribonucleotide)n-3'-hydroxyl + 5'-phospho-(deoxyribonucleotide)m = (deoxyribonucleotide)n+m + AMP + beta-nicotinamide D-nucleotide.. Functionally, DNA ligase that catalyzes the formation of phosphodiester linkages between 5'-phosphoryl and 3'-hydroxyl groups in double-stranded DNA using NAD as a coenzyme and as the energy source for the reaction. It is essential for DNA replication and repair of damaged DNA. The protein is DNA ligase of Rhizorhabdus wittichii (strain DSM 6014 / CCUG 31198 / JCM 15750 / NBRC 105917 / EY 4224 / RW1) (Sphingomonas wittichii).